Here is a 473-residue protein sequence, read N- to C-terminus: Photosystem II CP43 reaction center protein (473 aa).

Residues 1–14 (MKILYSLRRFYHVE) constitute a propeptide that is removed on maturation. T15 carries the post-translational modification N-acetylthreonine. Phosphothreonine is present on T15. 5 helical membrane-spanning segments follow: residues 69–93 (LFEV…PHLA), 134–155 (LLGP…KDRN), 178–200 (KALY…RKIT), 255–275 (KPFA…LSYS), and 291–312 (WFNN…ASQA). Residue E367 coordinates [CaMn4O5] cluster. Residues 447 to 471 (RARAAAAGFEKGIDRDLEPVLYMNP) form a helical membrane-spanning segment.

This sequence belongs to the PsbB/PsbC family. PsbC subfamily. PSII is composed of 1 copy each of membrane proteins PsbA, PsbB, PsbC, PsbD, PsbE, PsbF, PsbH, PsbI, PsbJ, PsbK, PsbL, PsbM, PsbT, PsbX, PsbY, PsbZ, Psb30/Ycf12, at least 3 peripheral proteins of the oxygen-evolving complex and a large number of cofactors. It forms dimeric complexes. The cofactor is Binds multiple chlorophylls and provides some of the ligands for the Ca-4Mn-5O cluster of the oxygen-evolving complex. It may also provide a ligand for a Cl- that is required for oxygen evolution. PSII binds additional chlorophylls, carotenoids and specific lipids..

Its subcellular location is the plastid. The protein resides in the chloroplast thylakoid membrane. One of the components of the core complex of photosystem II (PSII). It binds chlorophyll and helps catalyze the primary light-induced photochemical processes of PSII. PSII is a light-driven water:plastoquinone oxidoreductase, using light energy to abstract electrons from H(2)O, generating O(2) and a proton gradient subsequently used for ATP formation. The polypeptide is Photosystem II CP43 reaction center protein (Lolium perenne (Perennial ryegrass)).